The chain runs to 339 residues: Dihydroorotate dehydrogenase (quinone) (339 aa).

FMN-binding positions include 61-65 (AGLDK) and Thr-85. Residue Lys-65 participates in substrate binding. 110-114 (NRMGF) is a binding site for substrate. FMN is bound by residues Asn-138 and Asn-171. A substrate-binding site is contributed by Asn-171. Ser-174 acts as the Nucleophile in catalysis. Position 176 (Asn-176) interacts with substrate. Residues Lys-216 and Thr-244 each contribute to the FMN site. 245–246 (NT) serves as a coordination point for substrate. FMN-binding positions include Gly-267, Gly-296, and 317-318 (YS).

The protein belongs to the dihydroorotate dehydrogenase family. Type 2 subfamily. As to quaternary structure, monomer. FMN is required as a cofactor.

The protein resides in the cell membrane. It carries out the reaction (S)-dihydroorotate + a quinone = orotate + a quinol. Its pathway is pyrimidine metabolism; UMP biosynthesis via de novo pathway; orotate from (S)-dihydroorotate (quinone route): step 1/1. Functionally, catalyzes the conversion of dihydroorotate to orotate with quinone as electron acceptor. This Teredinibacter turnerae (strain ATCC 39867 / T7901) protein is Dihydroorotate dehydrogenase (quinone).